The sequence spans 119 residues: Iron-sulfur cluster insertion protein ErpA (119 aa).

Iron-sulfur cluster is bound by residues cysteine 47, cysteine 111, and cysteine 113.

The protein belongs to the HesB/IscA family. Homodimer. The cofactor is iron-sulfur cluster.

Required for insertion of 4Fe-4S clusters for at least IspG. In Blochmanniella floridana, this protein is Iron-sulfur cluster insertion protein ErpA.